The primary structure comprises 346 residues: Thiamine-phosphate synthase (346 aa).

The unknown stretch occupies residues 1-125 (MSVTPNPDQH…SKISAQIRYE (125 aa)). The segment at 126–346 (IYDLEVIILK…SKELLGKLKK (221 aa)) is thiamine-phosphate synthase. 4-amino-2-methyl-5-(diphosphooxymethyl)pyrimidine-binding positions include 177-181 (QYRCK) and asparagine 209. Residues aspartate 210 and aspartate 229 each coordinate Mg(2+). Serine 248 is a binding site for 4-amino-2-methyl-5-(diphosphooxymethyl)pyrimidine. Residue 274–276 (TKS) coordinates 2-[(2R,5Z)-2-carboxy-4-methylthiazol-5(2H)-ylidene]ethyl phosphate. Lysine 277 contacts 4-amino-2-methyl-5-(diphosphooxymethyl)pyrimidine. Glycine 304 contacts 2-[(2R,5Z)-2-carboxy-4-methylthiazol-5(2H)-ylidene]ethyl phosphate.

It belongs to the thiamine-phosphate synthase family. The cofactor is Mg(2+).

The catalysed reaction is 2-[(2R,5Z)-2-carboxy-4-methylthiazol-5(2H)-ylidene]ethyl phosphate + 4-amino-2-methyl-5-(diphosphooxymethyl)pyrimidine + 2 H(+) = thiamine phosphate + CO2 + diphosphate. The enzyme catalyses 2-(2-carboxy-4-methylthiazol-5-yl)ethyl phosphate + 4-amino-2-methyl-5-(diphosphooxymethyl)pyrimidine + 2 H(+) = thiamine phosphate + CO2 + diphosphate. It carries out the reaction 4-methyl-5-(2-phosphooxyethyl)-thiazole + 4-amino-2-methyl-5-(diphosphooxymethyl)pyrimidine + H(+) = thiamine phosphate + diphosphate. It functions in the pathway cofactor biosynthesis; thiamine diphosphate biosynthesis; thiamine phosphate from 4-amino-2-methyl-5-diphosphomethylpyrimidine and 4-methyl-5-(2-phosphoethyl)-thiazole: step 1/1. Functionally, condenses 4-methyl-5-(beta-hydroxyethyl)thiazole monophosphate (THZ-P) and 2-methyl-4-amino-5-hydroxymethyl pyrimidine pyrophosphate (HMP-PP) to form thiamine monophosphate (TMP). This chain is Thiamine-phosphate synthase, found in Prochlorococcus marinus (strain SARG / CCMP1375 / SS120).